The chain runs to 105 residues: Putative membrane protein insertion efficiency factor (105 aa).

Residues 76 to 105 (GHPGGVDPVPPGPHETPRKTSTHDDEPPSR) are disordered. A compositionally biased stretch (basic and acidic residues) spans 90–105 (ETPRKTSTHDDEPPSR).

It belongs to the UPF0161 family.

The protein resides in the cell inner membrane. Could be involved in insertion of integral membrane proteins into the membrane. The polypeptide is Putative membrane protein insertion efficiency factor (Chromohalobacter salexigens (strain ATCC BAA-138 / DSM 3043 / CIP 106854 / NCIMB 13768 / 1H11)).